The sequence spans 219 residues: Transmembrane protein 125 (219 aa).

4 consecutive transmembrane segments (helical) span residues 36–56 (LCFA…VALL), 68–88 (LAVG…QLMS), 114–134 (ALVV…LAGL), and 147–167 (MLSV…GLLL).

The protein resides in the membrane. This chain is Transmembrane protein 125 (TMEM125), found in Bos taurus (Bovine).